We begin with the raw amino-acid sequence, 67 residues long: MKTEIHPNYKAAKISCASCGTVYETRTSIGDINIEICSACHPFFTGKSKLVDTTGRVDKFKKKYKMQ.

The protein belongs to the bacterial ribosomal protein bL31 family. Type A subfamily. As to quaternary structure, part of the 50S ribosomal subunit.

Its function is as follows. Binds the 23S rRNA. The protein is Large ribosomal subunit protein bL31 of Leptospira borgpetersenii serovar Hardjo-bovis (strain JB197).